Reading from the N-terminus, the 122-residue chain is Transcription initiation factor IIA subunit 2 (122 aa).

Ser-95 and Ser-102 each carry phosphoserine.

It belongs to the TFIIA subunit 2 family. TFIIA is a heterodimer composed of the large TOA1 and a small TOA2 subunits. Interacts with TBP. Interacts with TAF11. Interacts with KAP122.

The protein localises to the cytoplasm. It is found in the nucleus. In terms of biological role, TFIIA is a component of the transcription machinery of RNA polymerase II and plays an important role in transcriptional activation. TFIIA in a complex with TBP mediates transcriptional activity. The protein is Transcription initiation factor IIA subunit 2 (TOA2) of Saccharomyces cerevisiae (strain ATCC 204508 / S288c) (Baker's yeast).